The sequence spans 214 residues: Adenylate kinase (214 aa).

10–15 (GAGKGT) is a binding site for ATP. An NMP region spans residues 30 to 59 (STGDMLRAAIKAGTELGKQAKSVIDAGQLV). AMP contacts are provided by residues threonine 31, arginine 36, 57–59 (QLV), 85–88 (GFPR), and glutamine 92. The segment at 122–159 (GRRAHLPSGRTYHVVYNPPKEEGKDDETGEPLVIREDD) is LID. ATP is bound by residues arginine 123 and 132 to 133 (TY). Residues arginine 156 and arginine 167 each coordinate AMP. Lysine 200 provides a ligand contact to ATP.

This sequence belongs to the adenylate kinase family. As to quaternary structure, monomer.

The protein resides in the cytoplasm. The enzyme catalyses AMP + ATP = 2 ADP. Its pathway is purine metabolism; AMP biosynthesis via salvage pathway; AMP from ADP: step 1/1. Functionally, catalyzes the reversible transfer of the terminal phosphate group between ATP and AMP. Plays an important role in cellular energy homeostasis and in adenine nucleotide metabolism. This chain is Adenylate kinase, found in Aliivibrio fischeri (strain ATCC 700601 / ES114) (Vibrio fischeri).